The chain runs to 160 residues: Ribosome-binding factor A (160 aa).

The span at 112-122 (KARQSDEKVRE) shows a compositional bias: basic and acidic residues. The disordered stretch occupies residues 112 to 160 (KARQSDEKVREASAGATYAGEADPYRKPDEDETDTEGAVEADETDDTAK). Residues 141 to 160 (EDETDTEGAVEADETDDTAK) show a composition bias toward acidic residues.

Belongs to the RbfA family. Monomer. Binds 30S ribosomal subunits, but not 50S ribosomal subunits or 70S ribosomes.

The protein resides in the cytoplasm. One of several proteins that assist in the late maturation steps of the functional core of the 30S ribosomal subunit. Associates with free 30S ribosomal subunits (but not with 30S subunits that are part of 70S ribosomes or polysomes). Required for efficient processing of 16S rRNA. May interact with the 5'-terminal helix region of 16S rRNA. The polypeptide is Ribosome-binding factor A (Streptomyces coelicolor (strain ATCC BAA-471 / A3(2) / M145)).